A 367-amino-acid chain; its full sequence is UDP-N-acetylglucosamine--N-acetylmuramyl-(pentapeptide) pyrophosphoryl-undecaprenol N-acetylglucosamine transferase (367 aa).

UDP-N-acetyl-alpha-D-glucosamine contacts are provided by residues 15-17 (TGG), Asn127, Arg163, Ser191, Ile249, and Gln294.

Belongs to the glycosyltransferase 28 family. MurG subfamily.

Its subcellular location is the cell inner membrane. It catalyses the reaction di-trans,octa-cis-undecaprenyl diphospho-N-acetyl-alpha-D-muramoyl-L-alanyl-D-glutamyl-meso-2,6-diaminopimeloyl-D-alanyl-D-alanine + UDP-N-acetyl-alpha-D-glucosamine = di-trans,octa-cis-undecaprenyl diphospho-[N-acetyl-alpha-D-glucosaminyl-(1-&gt;4)]-N-acetyl-alpha-D-muramoyl-L-alanyl-D-glutamyl-meso-2,6-diaminopimeloyl-D-alanyl-D-alanine + UDP + H(+). The protein operates within cell wall biogenesis; peptidoglycan biosynthesis. Functionally, cell wall formation. Catalyzes the transfer of a GlcNAc subunit on undecaprenyl-pyrophosphoryl-MurNAc-pentapeptide (lipid intermediate I) to form undecaprenyl-pyrophosphoryl-MurNAc-(pentapeptide)GlcNAc (lipid intermediate II). This chain is UDP-N-acetylglucosamine--N-acetylmuramyl-(pentapeptide) pyrophosphoryl-undecaprenol N-acetylglucosamine transferase, found in Burkholderia multivorans (strain ATCC 17616 / 249).